The primary structure comprises 1481 residues: ABC multidrug transporter atrH (1481 aa).

Basic and acidic residues predominate over residues 1 to 10 (MALPREERSL). Disordered regions lie at residues 1–45 (MALP…GIEQ) and 61–89 (ISQTNSGTEGLNPFLNTSDPELDPNSDQF). N-linked (GlcNAc...) asparagine glycosylation is found at Asn-19, Asn-76, and Asn-320. The ABC transporter 1 domain occupies 134 to 396 (ATVSNVWLKA…FIEMGFDCPE (263 aa)). Residues 507-527 (MTLSTVIGNSILALIISSVFY) form a helical membrane-spanning segment. N-linked (GlcNAc...) asparagine glycosylation occurs at Asn-530. 5 helical membrane passes run 542–562 (LLFFAILLNAFASALEMLTLW), 587–607 (LIVDLPAKAPVSIVFNLILYF), 616–636 (GHFFVFYLFSVTTTLTMSNVF), 650–670 (EVPASIFMMILMIYTGFTIPV), and 758–778 (FGILLGFLFFSLVAYIVASEL). The 244-residue stretch at 838-1081 (FHWQDVCYDI…LIKYFEDKGS (244 aa)) folds into the ABC transporter 2 domain. 874–881 (GVTGAGKT) is an ATP binding site. 6 helical membrane-spanning segments follow: residues 1174–1194 (YIYAKAAMCIIPPLFIGFTFW), 1210–1230 (IFMLLVIFPNLVQQMMPYFAM), 1249–1269 (AFMLASIVVELPWNMLMAVPA), 1298–1318 (LLVLIFMLFTSTFSSMMIAGI), 1327–1347 (IAQLMFSMCLIFCGVLASPDV), and 1358–1378 (ASPFSYLVGSVLAVGIAGAPV). The N-linked (GlcNAc...) asparagine glycan is linked to Asn-1395. A helical transmembrane segment spans residues 1446–1466 (VGILFVYIVFNTVAAVFLYWL).

Belongs to the ABC transporter superfamily. ABCG family. PDR (TC 3.A.1.205) subfamily.

The protein localises to the cell membrane. Functionally, pleiotropic ABC efflux transporter involved in the basal level of azole susceptibility. This Aspergillus oryzae (strain ATCC 42149 / RIB 40) (Yellow koji mold) protein is ABC multidrug transporter atrH.